We begin with the raw amino-acid sequence, 139 residues long: UPF0310 protein RSal33209_2865 (139 aa).

Belongs to the UPF0310 family.

This is UPF0310 protein RSal33209_2865 from Renibacterium salmoninarum (strain ATCC 33209 / DSM 20767 / JCM 11484 / NBRC 15589 / NCIMB 2235).